The sequence spans 55 residues: Protein CADMIUM TOLERANCE 2 (55 aa).

A helical membrane pass occupies residues 24 to 40; it reads GCLYACIFTALCCFCCY.

It belongs to the CYSTM1 family. As to expression, expressed only in roots.

The protein resides in the cell membrane. The protein localises to the secreted. It localises to the cell wall. In terms of biological role, confers resistance to heavy metal ions (e.g. cadmium (CdCl(2)) and copper (CuCl(2))) by chelating them at the plasma membrane of root cells, thus stopping their entry and reducing their accumulation. The sequence is that of Protein CADMIUM TOLERANCE 2 from Oryza sativa subsp. japonica (Rice).